The sequence spans 677 residues: DNA ligase (677 aa).

Residues 35–39, 84–85, and E115 contribute to the NAD(+) site; these read DAVYD and SL. Catalysis depends on K117, which acts as the N6-AMP-lysine intermediate. NAD(+)-binding residues include R138, E177, K296, and K320. Residues C414, C417, C432, and C437 each coordinate Zn(2+). The 79-residue stretch at 599-677 folds into the BRCT domain; sequence NGILKLNGKT…ETQLLEILEE (79 aa).

Belongs to the NAD-dependent DNA ligase family. LigA subfamily. Requires Mg(2+) as cofactor. It depends on Mn(2+) as a cofactor.

The enzyme catalyses NAD(+) + (deoxyribonucleotide)n-3'-hydroxyl + 5'-phospho-(deoxyribonucleotide)m = (deoxyribonucleotide)n+m + AMP + beta-nicotinamide D-nucleotide.. DNA ligase that catalyzes the formation of phosphodiester linkages between 5'-phosphoryl and 3'-hydroxyl groups in double-stranded DNA using NAD as a coenzyme and as the energy source for the reaction. It is essential for DNA replication and repair of damaged DNA. The chain is DNA ligase from Nostoc sp. (strain PCC 7120 / SAG 25.82 / UTEX 2576).